We begin with the raw amino-acid sequence, 696 residues long: Methionine--tRNA ligase (696 aa).

The 'HIGH' region motif lies at 12–22; it reads PYANGPLHLGH. Zn(2+)-binding residues include cysteine 143, cysteine 146, cysteine 156, and cysteine 159. Positions 330-334 match the 'KMSKS' region motif; the sequence is KMSKS. Lysine 333 provides a ligand contact to ATP. A tRNA-binding domain is found at 593-696; sequence DFAKLDLRIG…AGAQPGMPVR (104 aa).

This sequence belongs to the class-I aminoacyl-tRNA synthetase family. MetG type 1 subfamily. In terms of assembly, homodimer. It depends on Zn(2+) as a cofactor.

The protein localises to the cytoplasm. The enzyme catalyses tRNA(Met) + L-methionine + ATP = L-methionyl-tRNA(Met) + AMP + diphosphate. Its function is as follows. Is required not only for elongation of protein synthesis but also for the initiation of all mRNA translation through initiator tRNA(fMet) aminoacylation. The polypeptide is Methionine--tRNA ligase (Xanthomonas campestris pv. campestris (strain 8004)).